Reading from the N-terminus, the 643-residue chain is Threonine--tRNA ligase (643 aa).

Residues 1–61 enclose the TGS domain; sequence MPIITLPDGS…TEDSKLEIIT (61 aa). The interval 243-534 is catalytic; that stretch reads DHRKIGKALD…ITEEYAGFFP (292 aa). The Zn(2+) site is built by cysteine 334, histidine 385, and histidine 511.

This sequence belongs to the class-II aminoacyl-tRNA synthetase family. Homodimer. Zn(2+) serves as cofactor.

It localises to the cytoplasm. It carries out the reaction tRNA(Thr) + L-threonine + ATP = L-threonyl-tRNA(Thr) + AMP + diphosphate + H(+). Its function is as follows. Catalyzes the attachment of threonine to tRNA(Thr) in a two-step reaction: L-threonine is first activated by ATP to form Thr-AMP and then transferred to the acceptor end of tRNA(Thr). Also edits incorrectly charged L-seryl-tRNA(Thr). The protein is Threonine--tRNA ligase of Pasteurella multocida (strain Pm70).